The sequence spans 239 residues: Phosphoribosylaminoimidazole-succinocarboxamide synthase (239 aa).

The protein belongs to the SAICAR synthetase family.

It catalyses the reaction 5-amino-1-(5-phospho-D-ribosyl)imidazole-4-carboxylate + L-aspartate + ATP = (2S)-2-[5-amino-1-(5-phospho-beta-D-ribosyl)imidazole-4-carboxamido]succinate + ADP + phosphate + 2 H(+). Its pathway is purine metabolism; IMP biosynthesis via de novo pathway; 5-amino-1-(5-phospho-D-ribosyl)imidazole-4-carboxamide from 5-amino-1-(5-phospho-D-ribosyl)imidazole-4-carboxylate: step 1/2. The sequence is that of Phosphoribosylaminoimidazole-succinocarboxamide synthase from Dichelobacter nodosus (strain VCS1703A).